The sequence spans 383 residues: Putative F-box protein At4g09190 (383 aa).

An F-box domain is found at 16–67 (RSQREHIPLDLIVEIVSSLPAKSIVRFRSVSKLWSSIITTPDFTSSVVTRSL).

This is Putative F-box protein At4g09190 from Arabidopsis thaliana (Mouse-ear cress).